The following is a 720-amino-acid chain: Phosphoribosylformylglycinamidine synthase subunit PurL (720 aa).

The active site involves His-47. Residues Tyr-50 and Lys-89 each coordinate ATP. A Mg(2+)-binding site is contributed by Glu-91. Substrate contacts are provided by residues 92–95 (SHNH) and Arg-114. His-93 (proton acceptor) is an active-site residue. Asp-115 is a binding site for Mg(2+). Gln-238 contributes to the substrate binding site. A Mg(2+)-binding site is contributed by Asp-266. Residue 310-312 (ESQ) participates in substrate binding. ATP-binding residues include Asp-488 and Gly-525. Asn-526 serves as a coordination point for Mg(2+). Ser-528 provides a ligand contact to substrate.

This sequence belongs to the FGAMS family. As to quaternary structure, monomer. Part of the FGAM synthase complex composed of 1 PurL, 1 PurQ and 2 PurS subunits.

It localises to the cytoplasm. It carries out the reaction N(2)-formyl-N(1)-(5-phospho-beta-D-ribosyl)glycinamide + L-glutamine + ATP + H2O = 2-formamido-N(1)-(5-O-phospho-beta-D-ribosyl)acetamidine + L-glutamate + ADP + phosphate + H(+). It participates in purine metabolism; IMP biosynthesis via de novo pathway; 5-amino-1-(5-phospho-D-ribosyl)imidazole from N(2)-formyl-N(1)-(5-phospho-D-ribosyl)glycinamide: step 1/2. Functionally, part of the phosphoribosylformylglycinamidine synthase complex involved in the purines biosynthetic pathway. Catalyzes the ATP-dependent conversion of formylglycinamide ribonucleotide (FGAR) and glutamine to yield formylglycinamidine ribonucleotide (FGAM) and glutamate. The FGAM synthase complex is composed of three subunits. PurQ produces an ammonia molecule by converting glutamine to glutamate. PurL transfers the ammonia molecule to FGAR to form FGAM in an ATP-dependent manner. PurS interacts with PurQ and PurL and is thought to assist in the transfer of the ammonia molecule from PurQ to PurL. The polypeptide is Phosphoribosylformylglycinamidine synthase subunit PurL (Cereibacter sphaeroides (strain ATCC 17023 / DSM 158 / JCM 6121 / CCUG 31486 / LMG 2827 / NBRC 12203 / NCIMB 8253 / ATH 2.4.1.) (Rhodobacter sphaeroides)).